The primary structure comprises 479 residues: MGRAFEYVILGGGVAAGYAALEFVRRNGGASSQELCIISDEHFAPYERPALSKGYLLPQDAPRLPAFHTCVGSKDELLTEEWYNEHGIVLVLGTRVISADVRQKTLLTSSGETISYKTLIVATGARAVKLEEFGVSGSDARNVCYLRNVEDADKLVGVMRSCPGGNAVVVGGGYIGMECAAALVTNNIKVTMVFPKKHCMGRLFTPKIAEFYESYYASRGVTFVKEAAVTSMQISAGKVTAVNLGNGRRLPADMVVVGVGARANTGLFDGQLVMENGGIKVNGRMQASDASVYAVGDVAAFPVKLFGGDVRRLEHVDCARRTARHAVAAMLEGTGSVGHIDYLPFFYSRVFSLSWQFYGDNAGEAVHFGDLAPPGDGDGAAPKFGAYWVRDGRVAGAFLEGGSRQEYEAVAAAVRRGAAVADVAELERRGLAFATQATGGGGKPTCAWHATVGVAAAVSIAAFACWYGWQAPYVLKRDF.

Topologically, residues Met-1 to Arg-3 are cytoplasmic. Residues Ala-4 to Val-24 traverse the membrane as a helical segment. Residues Gly-12 to Ala-15, Glu-41, Arg-48, Lys-53, and Arg-147 to Asn-148 contribute to the FAD site. Residues Arg-25–Thr-445 lie on the Peroxisomal side of the membrane. Residues Gly-172–Glu-178, Arg-202, and Gly-260 each bind NAD(+). NADP(+) contacts are provided by residues Tyr-174–Glu-178, Arg-202, and Gly-260. Asp-297 provides a ligand contact to FAD. Residue Glu-314–His-315 participates in NAD(+) binding. Glu-314–His-315 lines the NADP(+) pocket. Val-316 lines the FAD pocket. Arg-320 is a binding site for L-ascorbate. Tyr-347 lines the FAD pocket. Tyr-347 contacts NAD(+). Tyr-347 is a binding site for NADP(+). Arg-349 is a binding site for L-ascorbate. Residues Cys-446 to Trp-466 form a helical membrane-spanning segment. Residues Tyr-467–Phe-479 are Cytoplasmic-facing.

The protein belongs to the FAD-dependent oxidoreductase family. It depends on FAD as a cofactor.

It localises to the peroxisome membrane. The catalysed reaction is 2 monodehydro-L-ascorbate radical + NADH + H(+) = 2 L-ascorbate + NAD(+). Catalyzes the conversion of monodehydroascorbate to ascorbate, oxidizing NADH in the process. Ascorbate is a major antioxidant against reactive oxygen species (ROS) and nitric oxide (NO). This Oryza sativa subsp. japonica (Rice) protein is Monodehydroascorbate reductase 1, peroxisomal.